We begin with the raw amino-acid sequence, 266 residues long: Thiazole synthase (266 aa).

Lys106 serves as the catalytic Schiff-base intermediate with DXP. Residues Gly167, 193–194 (AG), and 215–216 (NT) contribute to the 1-deoxy-D-xylulose 5-phosphate site.

Belongs to the ThiG family. As to quaternary structure, homotetramer. Forms heterodimers with either ThiH or ThiS.

It localises to the plastid. The protein resides in the chloroplast. The enzyme catalyses [ThiS sulfur-carrier protein]-C-terminal-Gly-aminoethanethioate + 2-iminoacetate + 1-deoxy-D-xylulose 5-phosphate = [ThiS sulfur-carrier protein]-C-terminal Gly-Gly + 2-[(2R,5Z)-2-carboxy-4-methylthiazol-5(2H)-ylidene]ethyl phosphate + 2 H2O + H(+). Its pathway is cofactor biosynthesis; thiamine diphosphate biosynthesis. In terms of biological role, catalyzes the rearrangement of 1-deoxy-D-xylulose 5-phosphate (DXP) to produce the thiazole phosphate moiety of thiamine. Sulfur is provided by the thiocarboxylate moiety of the carrier protein ThiS. In vitro, sulfur can be provided by H(2)S. In Cyanidium caldarium (Red alga), this protein is Thiazole synthase.